A 433-amino-acid chain; its full sequence is Inositol hexakisphosphate kinase 1 (433 aa).

The interval 100-160 is disordered; that stretch reads ETVEQDDTPE…SPKVELHSHS (61 aa). The span at 113-123 shows a compositional bias: basic residues; that stretch reads PRRKHSRRSLH. The span at 139–149 shows a compositional bias: polar residues; sequence SFETSESSQET. The segment covering 150–160 has biased composition (basic and acidic residues); the sequence is KSPKVELHSHS. Ser151 is modified (phosphoserine). 220 to 228 is a substrate binding site; sequence PCVLDLKMG. The disordered stretch occupies residues 362–383; it reads PLCGPSTSPSNTSLEAGPSSPP. A compositionally biased stretch (polar residues) spans 366–375; it reads PSTSPSNTSL.

This sequence belongs to the inositol phosphokinase (IPK) family.

Its subcellular location is the cytoplasm. The protein localises to the nucleus. The enzyme catalyses 1D-myo-inositol hexakisphosphate + ATP = 5-diphospho-1D-myo-inositol 1,2,3,4,6-pentakisphosphate + ADP. It carries out the reaction 1-diphospho-1D-myo-inositol 2,3,4,5,6-pentakisphosphate + ATP + H(+) = 1,5-bis(diphospho)-1D-myo-inositol 2,3,4,6-tetrakisphosphate + ADP. Its function is as follows. Converts inositol hexakisphosphate (InsP6) to diphosphoinositol pentakisphosphate (InsP7/PP-InsP5). Converts 1,3,4,5,6-pentakisphosphate (InsP5) to PP-InsP4. The protein is Inositol hexakisphosphate kinase 1 (Ip6k1) of Rattus norvegicus (Rat).